We begin with the raw amino-acid sequence, 474 residues long: Probable glycine dehydrogenase (decarboxylating) subunit 2 (474 aa).

Position 262 is an N6-(pyridoxal phosphate)lysine (K262).

It belongs to the GcvP family. C-terminal subunit subfamily. The glycine cleavage system is composed of four proteins: P, T, L and H. In this organism, the P 'protein' is a heterodimer of two subunits. It depends on pyridoxal 5'-phosphate as a cofactor.

It carries out the reaction N(6)-[(R)-lipoyl]-L-lysyl-[glycine-cleavage complex H protein] + glycine + H(+) = N(6)-[(R)-S(8)-aminomethyldihydrolipoyl]-L-lysyl-[glycine-cleavage complex H protein] + CO2. In terms of biological role, the glycine cleavage system catalyzes the degradation of glycine. The P protein binds the alpha-amino group of glycine through its pyridoxal phosphate cofactor; CO(2) is released and the remaining methylamine moiety is then transferred to the lipoamide cofactor of the H protein. In Thermotoga petrophila (strain ATCC BAA-488 / DSM 13995 / JCM 10881 / RKU-1), this protein is Probable glycine dehydrogenase (decarboxylating) subunit 2.